Here is a 624-residue protein sequence, read N- to C-terminus: Actin-related protein 8 (624 aa).

Met1 is modified (N-acetylmethionine). Residues Met1–Gly25 show a composition bias toward basic and acidic residues. The interval Met1 to Pro29 is disordered. Residues Ser55 and Thr56 each contribute to the ATP site. At Ser132 the chain carries Phosphoserine. Asp283–Asp286 contributes to the ATP binding site. Ser412 is subject to Phosphoserine. Residues Ser430–Leu462 are disordered.

It belongs to the actin family. ARP8 subfamily. As to quaternary structure, component of the chromatin remodeling INO80 complex; specifically part of a complex module associated with the DBINO domain of INO80. Exists as monomers and dimers, but the dimer is most probably the biologically relevant form required for stable interactions with histones that exploits the twofold symmetry of the nucleosome core.

The protein localises to the nucleus. It localises to the chromosome. Plays an important role in the functional organization of mitotic chromosomes. Exhibits low basal ATPase activity, and unable to polymerize. In terms of biological role, proposed core component of the chromatin remodeling INO80 complex which is involved in transcriptional regulation, DNA replication and probably DNA repair. Required for the recruitment of INO80 (and probably the INO80 complex) to sites of DNA damage Strongly prefer nucleosomes and H3-H4 tetramers over H2A-H2B dimers, suggesting it may act as a nucleosome recognition module within the complex. The polypeptide is Actin-related protein 8 (ACTR8) (Bos taurus (Bovine)).